The sequence spans 69 residues: uncharacterized protein (69 aa).

2 helical membrane passes run 7–29 (LLSGLGLFLGVLAGLAGLILGSI) and 44–66 (ALQVLNFLLLFISTIAGGFLGLL).

The protein localises to the cell membrane. This is an uncharacterized protein from Archaeoglobus fulgidus (strain ATCC 49558 / DSM 4304 / JCM 9628 / NBRC 100126 / VC-16).